The chain runs to 222 residues: Orotate phosphoribosyltransferase (222 aa).

Position 29 (Lys-29) interacts with 5-phospho-alpha-D-ribose 1-diphosphate. 37–38 (FF) is a binding site for orotate. 5-phospho-alpha-D-ribose 1-diphosphate is bound by residues 75–76 (YK), Arg-101, Lys-102, Lys-105, His-107, and 126–134 (DDVISAGTS). Residues Ser-130 and Arg-158 each contribute to the orotate site.

This sequence belongs to the purine/pyrimidine phosphoribosyltransferase family. PyrE subfamily. In terms of assembly, homodimer. Mg(2+) is required as a cofactor.

It catalyses the reaction orotidine 5'-phosphate + diphosphate = orotate + 5-phospho-alpha-D-ribose 1-diphosphate. Its pathway is pyrimidine metabolism; UMP biosynthesis via de novo pathway; UMP from orotate: step 1/2. Its function is as follows. Catalyzes the transfer of a ribosyl phosphate group from 5-phosphoribose 1-diphosphate to orotate, leading to the formation of orotidine monophosphate (OMP). The polypeptide is Orotate phosphoribosyltransferase (Polynucleobacter asymbioticus (strain DSM 18221 / CIP 109841 / QLW-P1DMWA-1) (Polynucleobacter necessarius subsp. asymbioticus)).